Reading from the N-terminus, the 519-residue chain is NAD-dependent histone deacetylase SIR2 (519 aa).

The disordered stretch occupies residues 154–212; that stretch reads EIDENDNKNDGTNNSDIDSDIDSNSDMDSQSESGELDDAMDVDDSLSENEDEYDQDMST. The segment covering 187 to 208 has biased composition (acidic residues); it reads GELDDAMDVDDSLSENEDEYDQ. Residues 221 to 486 enclose the Deacetylase sirtuin-type domain; the sequence is MTPFKYKLPD…SYLCKCLKWD (266 aa). NAD(+) is bound by residues 246-265 and 328-331; these read GAGISTSLGIPDFRSFKGLY and QNID. His-348 serves as the catalytic Proton acceptor. Residues Cys-356, Cys-359, Cys-380, and Cys-383 each coordinate Zn(2+). NAD(+) contacts are provided by residues 430–432, 455–457, and Cys-472; these read GTS and NKD.

It belongs to the sirtuin family. Class I subfamily. Interacts with HXK1. Zn(2+) serves as cofactor.

Its subcellular location is the nucleus. The catalysed reaction is N(6)-acetyl-L-lysyl-[protein] + NAD(+) + H2O = 2''-O-acetyl-ADP-D-ribose + nicotinamide + L-lysyl-[protein]. Its function is as follows. NAD-dependent deacetylase. Heterochromatin component that silences transcription at silent mating loci, telomeres and the ribosomal DNA, and that also suppresses recombination in the rDNA and extends replicative life span. It acts as a NAD-dependent histone deacetylase, which deacetylates 'Lys-9' and 'Lys-14' of Histone H3 and 'Lys-16' of Histone H4. Functions in the distribution of oxidatively damaged proteins during cell division. Mediates phenotypic switching. The sequence is that of NAD-dependent histone deacetylase SIR2 from Candida albicans (strain SC5314 / ATCC MYA-2876) (Yeast).